Consider the following 185-residue polypeptide: Ribosome-recycling factor (185 aa).

Belongs to the RRF family.

The protein resides in the cytoplasm. Its function is as follows. Responsible for the release of ribosomes from messenger RNA at the termination of protein biosynthesis. May increase the efficiency of translation by recycling ribosomes from one round of translation to another. The sequence is that of Ribosome-recycling factor from Streptococcus uberis (strain ATCC BAA-854 / 0140J).